The sequence spans 313 residues: Glucosyl-dolichyl phosphate glucuronosyltransferase (313 aa).

The chain crosses the membrane as a helical span at residues 284-304 (LIAIFVFTAAVGFGYVYGLLT).

Belongs to the glycosyltransferase 2 family.

It is found in the cell membrane. It catalyses the reaction an archaeal dolichyl alpha-D-glucosyl phosphate + UDP-alpha-D-glucuronate = an archaeal dolichyl beta-D-glucuronosyl-(1-&gt;4)-alpha-D-glucosyl phosphate + UDP + H(+). The protein operates within cell surface structure biogenesis; S-layer biogenesis. Functionally, involved in the protein N-glycosylation pathway responsible for the assembly and attachment of an N-linked pentasaccharide that decorates the S-layer glycoprotein and flagellins. Catalyzes the transfer of a glucuronate residue (GlcA) to a glucose residue already bound to a dolichol phosphate (DolP), a compound that serves as a glycan lipid carrier in Archaea. In vitro, is able to add GlcA to DolP-Glc in which the omega-position isoprene is not saturated. However, the likely physiological lipid substrate is alpha,omega-saturated. The polypeptide is Glucosyl-dolichyl phosphate glucuronosyltransferase (Haloferax volcanii (strain ATCC 29605 / DSM 3757 / JCM 8879 / NBRC 14742 / NCIMB 2012 / VKM B-1768 / DS2) (Halobacterium volcanii)).